The primary structure comprises 599 residues: MKNIRNFSIIAHIDHGKSTLSDRIIQICGGLSDREMEAQVLDSMDLERERGITIKAQSVTLDFKASDGETYQLNFIDTPGHVDFSYEVSRSLAACEGALLVVDAGQGVEAQTLANCYTAMEMDLEVVPVLNKIDLPAADPERVAEEIEDIVGIDATDAVRCSAKTGVGVTDVLERLVRDIPPPQGDPDGPLQALIIDSWFDNYLGVVSLVRIKNGTMRKGDKIKVMSTRQTYNADRLGIFTPKQVDRTELKCGEVGWLVCAIKDILGAPVGDTLTSARNPAEKALPGFKKVKPQVYAGLFPVSSDDYESFRDALGKLSLNDASLFYEPESSSALGFGFRCGFLGLLHMEIIQERLEREYDLDLITTAPTVVYEVETTAKETIYVDSPSKLPPLNNIYELREPIAECHMLLPQAYLGNVITLCIEKRGVQTNMVYHGNQVALTYEIPMAEVVLDFFDRLKSTSRGYASLDYNFKRFQASDMVRVDVLINNERVDALALITHRDNSQSRGRELVEKMKDLIPRQQFDIAIQAAIGTHIIARSTVKQLRKNVLAKCYGGDISRKKKLLQKQKEGKKRMKQIGNVELPQEAFLAILHVGKDNK.

The 183-residue stretch at 2 to 184 (KNIRNFSIIA…RLVRDIPPPQ (183 aa)) folds into the tr-type G domain. GTP is bound by residues 14-19 (DHGKST) and 131-134 (NKID).

It belongs to the TRAFAC class translation factor GTPase superfamily. Classic translation factor GTPase family. LepA subfamily.

It localises to the cell inner membrane. The enzyme catalyses GTP + H2O = GDP + phosphate + H(+). Functionally, required for accurate and efficient protein synthesis under certain stress conditions. May act as a fidelity factor of the translation reaction, by catalyzing a one-codon backward translocation of tRNAs on improperly translocated ribosomes. Back-translocation proceeds from a post-translocation (POST) complex to a pre-translocation (PRE) complex, thus giving elongation factor G a second chance to translocate the tRNAs correctly. Binds to ribosomes in a GTP-dependent manner. The sequence is that of Elongation factor 4 from Salmonella paratyphi A (strain ATCC 9150 / SARB42).